Consider the following 126-residue polypeptide: B3 domain-containing protein At5g54067 (126 aa).

The segment at residues 20 to 118 (SDIVGNVVLP…KFVVLNFQYS (99 aa)) is a DNA-binding region (TF-B3).

It is found in the nucleus. The chain is B3 domain-containing protein At5g54067 from Arabidopsis thaliana (Mouse-ear cress).